Here is a 177-residue protein sequence, read N- to C-terminus: Translation initiation factor IF-3 (177 aa).

It belongs to the IF-3 family. In terms of assembly, monomer.

The protein resides in the cytoplasm. Functionally, IF-3 binds to the 30S ribosomal subunit and shifts the equilibrium between 70S ribosomes and their 50S and 30S subunits in favor of the free subunits, thus enhancing the availability of 30S subunits on which protein synthesis initiation begins. This Acaryochloris marina (strain MBIC 11017) protein is Translation initiation factor IF-3.